The sequence spans 393 residues: Methyltransferase-like protein 22 (393 aa).

The tract at residues 54 to 87 is disordered; it reads WTDSGAEDSGPTDVSTEEMPPAGSGSGHSHEDLS. A Phosphoserine modification is found at Ser120.

It belongs to the methyltransferase superfamily. METTL22 family. As to quaternary structure, interacts with members of the heat shock protein 90 and 70 families; these proteins probably are methylation substrates.

Its subcellular location is the nucleus. It carries out the reaction L-lysyl-[protein] + 3 S-adenosyl-L-methionine = N(6),N(6),N(6)-trimethyl-L-lysyl-[protein] + 3 S-adenosyl-L-homocysteine + 3 H(+). Functionally, protein N-lysine methyltransferase. Trimethylates KIN at Lys-135 (in vitro). The chain is Methyltransferase-like protein 22 (Mettl22) from Mus musculus (Mouse).